A 534-amino-acid chain; its full sequence is Inosine-5'-monophosphate dehydrogenase (534 aa).

2 CBS domains span residues 117–181 and 190–255; these read YVMQ…GTPI and TTPI…PMAS. NAD(+)-binding positions include 292 to 294 and 342 to 344; these read DSS and GMG. K(+) is bound by residues G344 and G346. S347 is a binding site for IMP. Residue C349 participates in K(+) binding. C349 functions as the Thioimidate intermediate in the catalytic mechanism. Residues 382 to 384, 405 to 406, and 430 to 434 each bind IMP; these read DGG, GG, and YRGMG. R448 functions as the Proton acceptor in the catalytic mechanism. Residue Q461 coordinates IMP. K(+)-binding residues include E520, G521, and G522.

It belongs to the IMPDH/GMPR family. Homotetramer. K(+) is required as a cofactor.

The protein localises to the cytoplasm. It carries out the reaction IMP + NAD(+) + H2O = XMP + NADH + H(+). It functions in the pathway purine metabolism; XMP biosynthesis via de novo pathway; XMP from IMP: step 1/1. Its activity is regulated as follows. Mycophenolic acid (MPA) is a non-competitive inhibitor that prevents formation of the closed enzyme conformation by binding to the same site as the amobile flap. In contrast, mizoribine monophosphate (MZP) is a competitive inhibitor that induces the closed conformation. MPA is a potent inhibitor of mammalian IMPDHs but a poor inhibitor of the bacterial enzymes. MZP is a more potent inhibitor of bacterial IMPDH. Catalyzes the conversion of inosine 5'-phosphate (IMP) to xanthosine 5'-phosphate (XMP), the first committed and rate-limiting step in the de novo synthesis of guanine nucleotides, and therefore plays an important role in the regulation of cell growth. The sequence is that of Inosine-5'-monophosphate dehydrogenase from Caenorhabditis elegans.